The primary structure comprises 393 residues: Venom metalloproteinase BumaMPs1 (393 aa).

The signal sequence occupies residues 1 to 15 (MFVHLLVLLFAAVEA). Residue Asn-158 is glycosylated (N-linked (GlcNAc...) asparagine). Positions 167–377 (KCVKIEYVFV…RVEELITRRK (211 aa)) constitute a Peptidase M12B domain. A Zn(2+)-binding site is contributed by His-323. Glu-324 is a catalytic residue. The Zn(2+) site is built by His-327 and His-333. The segment at 378–393 (INHCIVETCDGKRKRN) is disintegrin-like domain.

Belongs to the venom metalloproteinase (M12B) family. It depends on Zn(2+) as a cofactor. Post-translationally, contains several disulfide bonds. As to expression, expressed by the venom gland.

The protein resides in the secreted. Functionally, metalloprotease. This Olivierus martensii (Manchurian scorpion) protein is Venom metalloproteinase BumaMPs1.